Reading from the N-terminus, the 66-residue chain is UPF0370 protein CKO_00315 (66 aa).

A helical transmembrane segment spans residues 4 to 24 (LAKYWWILVLVFLVGVLINVI). Residues 39–66 (KPELPPHRDFNDKWDDDDDWPKKDQPKK) form a disordered region. Over residues 42 to 51 (LPPHRDFNDK) the composition is skewed to basic and acidic residues.

This sequence belongs to the UPF0370 family.

Its subcellular location is the cell membrane. This chain is UPF0370 protein CKO_00315, found in Citrobacter koseri (strain ATCC BAA-895 / CDC 4225-83 / SGSC4696).